The sequence spans 233 residues: Large ribosomal subunit protein uL1 (233 aa).

It belongs to the universal ribosomal protein uL1 family. Part of the 50S ribosomal subunit.

Functionally, binds directly to 23S rRNA. The L1 stalk is quite mobile in the ribosome, and is involved in E site tRNA release. Protein L1 is also a translational repressor protein, it controls the translation of the L11 operon by binding to its mRNA. The sequence is that of Large ribosomal subunit protein uL1 from Shewanella sp. (strain ANA-3).